The following is a 487-amino-acid chain: MDINVAQLFQTINLNVIMPEVILSVLGMALLLVNVFVPSKSKGYLAWLSLIGIVGAGFAAVTGWGTTVSSFSDSVVLDNFAIFFKIIFLLAAGLAVLISDQYMSREECNHGELYPIILFTTVGMMLMAAATDLMTIFLGLELMSISLYVLAGFNRDSIKSNEAGMKYFLLGAFSTGFLLYGMALIYGVTGTTRVAKIASLVTQVGGASNTMLLIGMFLMLTGFLFKIAAAPFHMWTPDVYEGAPTPMTAFMSAGPKAAGFAAMLRLLLVAFPAMIADWSDLLWILAVLTMTVGNFTALRQDNIKRMLAYSSIAHAGYCLVGFASGTATGTSGILFYMLSYTFMNIGAFAVIVLVGKKGEPNGTVMDYAGLGHKRPLLALAMTVFMFSLAGMPPTAGFIGKFYLFSGAVQAGYIWLAIIGVLNSAASVYYYLRVIVYMYFKPGEEEFDWFNVTAPVALALVVSAAGSLIPGIIPSMILQFAQQAVKLI.

14 helical membrane passes run 16–36 (VIMPEVILSVLGMALLLVNVF), 45–65 (LAWLSLIGIVGAGFAAVTGWG), 79–99 (NFAIFFKIIFLLAAGLAVLIS), 111–131 (GELYPIILFTTVGMMLMAAAT), 133–153 (LMTIFLGLELMSISLYVLAGF), 168–188 (FLLGAFSTGFLLYGMALIYGV), 212–232 (LLIGMFLMLTGFLFKIAAAPF), 257–276 (AAGFAAMLRLLLVAFPAMIA), 281–298 (LLWILAVLTMTVGNFTAL), 306–326 (MLAYSSIAHAGYCLVGFASGT), 333–353 (ILFYMLSYTFMNIGAFAVIVL), 378–398 (ALAMTVFMFSLAGMPPTAGFI), 413–435 (IWLAIIGVLNSAASVYYYLRVIV), and 457–477 (LALVVSAAGSLIPGIIPSMIL).

It belongs to the complex I subunit 2 family. In terms of assembly, NDH-1 is composed of 14 different subunits. Subunits NuoA, H, J, K, L, M, N constitute the membrane sector of the complex.

It localises to the cell inner membrane. It carries out the reaction a quinone + NADH + 5 H(+)(in) = a quinol + NAD(+) + 4 H(+)(out). Functionally, NDH-1 shuttles electrons from NADH, via FMN and iron-sulfur (Fe-S) centers, to quinones in the respiratory chain. The immediate electron acceptor for the enzyme in this species is believed to be ubiquinone. Couples the redox reaction to proton translocation (for every two electrons transferred, four hydrogen ions are translocated across the cytoplasmic membrane), and thus conserves the redox energy in a proton gradient. This chain is NADH-quinone oxidoreductase subunit N, found in Trichlorobacter lovleyi (strain ATCC BAA-1151 / DSM 17278 / SZ) (Geobacter lovleyi).